The following is a 1007-amino-acid chain: Tolloid-like protein 1 (1007 aa).

Residues 1 to 25 form the signal peptide; the sequence is MNMPSWLIFLLTGWTFCGNFFACGG. The propeptide occupies 26–142; the sequence is LDYDYPNYEN…GKSKKIRIPR (117 aa). Residues 115-139 are disordered; sequence SGQENTTANSQKVDNNQSGKSKKIR. The span at 116–133 shows a compositional bias: polar residues; sequence GQENTTANSQKVDNNQSG. In terms of domain architecture, Peptidase M12A spans 143–342; it reads AATSRTERIW…AQARKLYRCP (200 aa). N-linked (GlcNAc...) asparagine glycosylation occurs at asparagine 164. Intrachain disulfides connect cysteine 185-cysteine 341, cysteine 205-cysteine 227, cysteine 207-cysteine 208, and cysteine 344-cysteine 370. Histidine 235 provides a ligand contact to Zn(2+). The active site involves glutamate 236. Histidine 239 and histidine 245 together coordinate Zn(2+). CUB domains are found at residues 344-456 and 457-569; these read CGET…YEAI and CGGE…FLKE. Asparagine 354 and asparagine 385 each carry an N-linked (GlcNAc...) asparagine glycan. Disulfide bonds link cysteine 397–cysteine 419, cysteine 457–cysteine 483, cysteine 510–cysteine 532, cysteine 573–cysteine 585, cysteine 581–cysteine 594, cysteine 596–cysteine 609, cysteine 613–cysteine 639, cysteine 666–cysteine 688, cysteine 729–cysteine 740, cysteine 736–cysteine 749, cysteine 751–cysteine 764, cysteine 769–cysteine 795, cysteine 822–cysteine 844, cysteine 882–cysteine 912, and cysteine 939–cysteine 961. The region spanning 569–610 is the EGF-like 1; calcium-binding domain; it reads EEDECARPDNGGCEQRCVNTLGSYKCSCDPGYELAPDKKSCE. Positions 613 to 725 constitute a CUB 3 domain; the sequence is CGGLLTKLNG…KGFRAHFFSD (113 aa). Asparagine 621 carries N-linked (GlcNAc...) asparagine glycosylation. The EGF-like 2; calcium-binding domain occupies 725 to 765; sequence DKDECSKDNGGCQHECINTIGSYVCQCRNGFVLHDNKHDCK. 2 CUB domains span residues 769–881 and 882–998; these read CEHR…HSTE and CGGR…YRSV.

Requires Zn(2+) as cofactor.

The protein resides in the secreted. Protease which processes procollagen C-propeptides, such as chordin. Required for the embryonic development. Predominant protease, which in the development, influences dorsal-ventral patterning and skeletogenesis. The chain is Tolloid-like protein 1 (tll1) from Xenopus laevis (African clawed frog).